The chain runs to 133 residues: Type III secretion protein HrcQb (133 aa).

The segment covering 1 to 21 (MSTEDLYQDDVEMLDDYEEPV) has biased composition (acidic residues). The disordered stretch occupies residues 1–60 (MSTEDLYQDDVEMLDDYEEPVPEQADQQQRDDEYAEHAFGYADSDAEHEEQSGDHHESPM). Residues 49 to 59 (EEQSGDHHESP) are compositionally biased toward basic and acidic residues.

This sequence belongs to the FliN/MopA/SpaO family. As to quaternary structure, homotetramer. The four monomers assemble into two tightly bound homodimers. Interacts with HrcQa.

The protein resides in the cytoplasm. In terms of biological role, component of the type III secretion system, which is required for effector protein delivery, parasitism, and pathogenicity. Probably participates in the formation of a C-ring-like assembly along with HrcQa. This chain is Type III secretion protein HrcQb (hrcQb), found in Pseudomonas syringae pv. syringae.